We begin with the raw amino-acid sequence, 181 residues long: Ribulose bisphosphate carboxylase small subunit, chloroplastic 2 (181 aa).

Residues 1-57 (MASSVISSAAVATRTNVTQAGSMIAPFTGLKSAATFPVSRKQNLDITSIASNGGRVR) constitute a chloroplast transit peptide.

Belongs to the RuBisCO small chain family. As to quaternary structure, heterohexadecamer of 8 large and 8 small subunits.

It is found in the plastid. The protein resides in the chloroplast. Functionally, ruBisCO catalyzes two reactions: the carboxylation of D-ribulose 1,5-bisphosphate, the primary event in carbon dioxide fixation, as well as the oxidative fragmentation of the pentose substrate. Both reactions occur simultaneously and in competition at the same active site. Although the small subunit is not catalytic it is essential for maximal activity. This is Ribulose bisphosphate carboxylase small subunit, chloroplastic 2 from Solanum tuberosum (Potato).